The primary structure comprises 918 residues: Interleukin-6 receptor subunit beta (918 aa).

Residues 1-22 (MLTLQTWLVQALFIFLTTESTG) form the signal peptide. Over 23-619 (ELLDPCGYIS…TPKFAQGEIE (597 aa)) the chain is Extracellular. One can recognise an Ig-like C2-type domain in the interval 26 to 120 (DPCGYISPES…LEQNVYGITI (95 aa)). Intrachain disulfides connect C28/C54 and C48/C103. N-linked (GlcNAc...) asparagine glycosylation is found at N43, N83, and N131. Fibronectin type-III domains are found at residues 125 to 216 (PPEK…NFDP), 224 to 324 (PPHN…TYED), 329 to 424 (APSF…FQAT), 426 to 517 (PVMD…LKQA), and 518 to 613 (PPSK…TPKF). A disulfide bond links C134 and C144. N157 is a glycosylation site (N-linked (GlcNAc...) asparagine). A disulfide bridge links C172 with C182. A glycan (N-linked (GlcNAc...) asparagine) is linked at N227. Residues 310–314 (WSDWS) carry the WSXWS motif motif. 2 N-linked (GlcNAc...) asparagine glycosylation sites follow: N379 and N383. An N-linked (GlcNAc...) (complex) asparagine glycan is attached at N390. A disulfide bond links C458 and C466. N-linked (GlcNAc...) asparagine glycosylation is found at N553 and N564. A helical membrane pass occupies residues 620–641 (AIVVPVCLAFLLTTLLGVLFCF). Residues 642-918 (NKRDLIKKHI…TVRQGGYMPQ (277 aa)) lie on the Cytoplasmic side of the membrane. A Box 1 motif motif is present at residues 651-659 (IWPNVPDPS). Disordered regions lie at residues 660-681 (KSHI…SKDQ) and 722-758 (EGHS…STVQ). S661 and S667 each carry phosphoserine. The segment covering 731–755 (SSCMSSSRPSISSSDENESSQNTSS) has biased composition (low complexity). Phosphoserine is present on residues S782, S789, S829, and S839.

This sequence belongs to the type I cytokine receptor family. Type 2 subfamily. As to quaternary structure, component of a hexamer of two molecules each of IL6, IL6R and IL6ST; associates with the complex IL6:IL6R but does not interact with IL6. Forms heterodimers composed of LIFR and IL6ST (type I OSM receptor) which are activated by LIF and OSM. Also forms heterodimers composed of OSMR and IL6ST (type II receptor) which are activated by OSM but not by LIF. Component of a receptor complex composed of IL6ST/GP130, IL27RA/WSX1 and CNTFR which interacts with the neuroprotective peptide humanin. Interacts with HCK. Interacts with INPP5D/SHIP1. Interacts with SRC and YES. Interacts with ARMH4; this interaction prevents IL6ST protein homodimerization and bridges ARMH4 with IL6R and STAT3 and therefore inhibits phosphorylation of STAT3 at 'Tyr-705'. In terms of assembly, (Microbial infection) The homodimer binds two molecules of herpes virus 8/HHV-8 protein vIL-6. In terms of processing, phosphorylation of Ser-782 down-regulates cell surface expression. Post-translationally, heavily N-glycosylated. Glycosylation is required for protein stability and localization in plasma membrane but not for ligand binding. In terms of tissue distribution, found in all the tissues and cell lines examined. Expression not restricted to IL6 responsive cells. As to expression, expressed in blood serum (at protein level).

The protein localises to the cell membrane. The protein resides in the secreted. In terms of biological role, signal-transducing molecule. The receptor systems for IL6, LIF, OSM, CNTF, IL11, CTF1 and BSF3 can utilize IL6ST for initiating signal transmission. Binding of IL6 to IL6R induces IL6ST homodimerization and formation of a high-affinity receptor complex, which activates the intracellular JAK-MAPK and JAK-STAT3 signaling pathways. That causes phosphorylation of IL6ST tyrosine residues which in turn activates STAT3. In parallel, the IL6 signaling pathway induces the expression of two cytokine receptor signaling inhibitors, SOCS1 and SOCS3, which inhibit JAK and terminate the activity of the IL6 signaling pathway as a negative feedback loop. Also activates the yes-associated protein 1 (YAP) and NOTCH pathways to control inflammation-induced epithelial regeneration, independently of STAT3. Acts as a receptor for the neuroprotective peptide humanin as part of a complex with IL27RA/WSX1 and CNTFR. Mediates signals which regulate immune response, hematopoiesis, pain control and bone metabolism. Has a role in embryonic development. Essential for survival of motor and sensory neurons and for differentiation of astrocytes. Required for expression of TRPA1 in nociceptive neurons. Required for the maintenance of PTH1R expression in the osteoblast lineage and for the stimulation of PTH-induced osteoblast differentiation. Required for normal trabecular bone mass and cortical bone composition. Binds to the soluble IL6:sIL6R complex (hyper-IL6), thereby blocking IL6 trans-signaling. Inhibits sIL6R-dependent acute phase response. Also blocks IL11 cluster signaling through IL11R. This chain is Interleukin-6 receptor subunit beta, found in Homo sapiens (Human).